Here is a 79-residue protein sequence, read N- to C-terminus: Small ribosomal subunit protein uS17 (79 aa).

Belongs to the universal ribosomal protein uS17 family. Part of the 30S ribosomal subunit.

In terms of biological role, one of the primary rRNA binding proteins, it binds specifically to the 5'-end of 16S ribosomal RNA. In Mesorhizobium japonicum (strain LMG 29417 / CECT 9101 / MAFF 303099) (Mesorhizobium loti (strain MAFF 303099)), this protein is Small ribosomal subunit protein uS17.